An 85-amino-acid polypeptide reads, in one-letter code: ATP synthase subunit c (85 aa).

2 helical membrane-spanning segments follow: residues 1 to 21 and 53 to 73; these read MLAWVIIASIITAGFSVALVG and LLFALAFIETIMIFTLTVALI.

The protein belongs to the ATPase C chain family. In terms of assembly, F-type ATPases have 2 components, F(1) - the catalytic core - and F(0) - the membrane proton channel. F(1) has five subunits: alpha(3), beta(3), gamma(1), delta(1), epsilon(1). F(0) has three main subunits: a(1), b(2) and c(10-14). The alpha and beta chains form an alternating ring which encloses part of the gamma chain. F(1) is attached to F(0) by a central stalk formed by the gamma and epsilon chains, while a peripheral stalk is formed by the delta and b chains.

Its subcellular location is the cell inner membrane. Functionally, f(1)F(0) ATP synthase produces ATP from ADP in the presence of a proton or sodium gradient. F-type ATPases consist of two structural domains, F(1) containing the extramembraneous catalytic core and F(0) containing the membrane proton channel, linked together by a central stalk and a peripheral stalk. During catalysis, ATP synthesis in the catalytic domain of F(1) is coupled via a rotary mechanism of the central stalk subunits to proton translocation. Its function is as follows. Key component of the F(0) channel; it plays a direct role in translocation across the membrane. A homomeric c-ring of between 10-14 subunits forms the central stalk rotor element with the F(1) delta and epsilon subunits. The polypeptide is ATP synthase subunit c (Dictyoglomus turgidum (strain DSM 6724 / Z-1310)).